The following is a 129-amino-acid chain: Small ribosomal subunit protein uS9 (129 aa).

This sequence belongs to the universal ribosomal protein uS9 family.

This chain is Small ribosomal subunit protein uS9 (rps9), found in Thermoplasma acidophilum (strain ATCC 25905 / DSM 1728 / JCM 9062 / NBRC 15155 / AMRC-C165).